The chain runs to 609 residues: Proteasome-associated ATPase (609 aa).

Residues M1–A24 are disordered. A coiled-coil region spans residues S19 to Q96. Position 296-301 (G296–L301) interacts with ATP. A docks into pockets in the proteasome alpha-ring region spans residues Y608 to L609.

Belongs to the AAA ATPase family. In terms of assembly, homohexamer. Assembles into a hexameric ring structure that caps the 20S proteasome core. Strongly interacts with the prokaryotic ubiquitin-like protein Pup through a hydrophobic interface; the interacting region of ARC lies in its N-terminal coiled-coil domain. There is one Pup binding site per ARC hexamer ring. Upon ATP-binding, the C-terminus of ARC interacts with the alpha-rings of the proteasome core, possibly by binding to the intersubunit pockets.

The protein operates within protein degradation; proteasomal Pup-dependent pathway. Functionally, ATPase which is responsible for recognizing, binding, unfolding and translocation of pupylated proteins into the bacterial 20S proteasome core particle. May be essential for opening the gate of the 20S proteasome via an interaction with its C-terminus, thereby allowing substrate entry and access to the site of proteolysis. Thus, the C-termini of the proteasomal ATPase may function like a 'key in a lock' to induce gate opening and therefore regulate proteolysis. The chain is Proteasome-associated ATPase from Mycobacterium ulcerans (strain Agy99).